The chain runs to 249 residues: MAENGAAVQENQNVIRHQEVGHKSLLQSDALYQYILETSVYPREPESMKELRELTAKHPWNLMTTSADEGQFLNMLLKLINAKNTMEIGVYTGYSLLATALAIPHDGKILAMDINRENYEIGLPVIEKAGVAHKIDFREGPALPVLDQLVEDKNNHGTYDFIFVDADKDNYINYHKRIIDLVKVGGLIGYDNTLWNGSLVAPADTPMRKYVRYYRDFILELNKALAADPRIEICMLPVGDGITLGRRIS.

Lysine 23 is a substrate binding site. S-adenosyl-L-methionine is bound by residues threonine 65, glutamate 87, 89 to 90, serine 95, aspartate 113, and alanine 142; that span reads GV. Substrate is bound at residue aspartate 165. Aspartate 165 is an a divalent metal cation binding site. Aspartate 167 is a binding site for S-adenosyl-L-methionine. 2 residues coordinate a divalent metal cation: aspartate 191 and asparagine 192. Asparagine 196 is a substrate binding site.

This sequence belongs to the class I-like SAM-binding methyltransferase superfamily. Cation-dependent O-methyltransferase family. CCoAMT subfamily. It depends on a divalent metal cation as a cofactor. In terms of tissue distribution, mostly expressed in petal limbs and tubes, and, at low levels, in flower buds, stamens, pistils, stems, roots and leaves.

It is found in the cytoplasm. The protein localises to the cytosol. The catalysed reaction is (E)-caffeoyl-CoA + S-adenosyl-L-methionine = (E)-feruloyl-CoA + S-adenosyl-L-homocysteine + H(+). It catalyses the reaction (E)-5-hydroxyferuloyl-CoA + S-adenosyl-L-methionine = (E)-sinapoyl-CoA + S-adenosyl-L-homocysteine + H(+). It participates in aromatic compound metabolism; phenylpropanoid biosynthesis. Involved in the production of floral volatile phenylpropanoids in flowers of fragrant cultivars (e.g. cv. Mitchell and cv. V26) from cinnamic acid, a common precursor with the anthocyanin biosynthesis pathway involved in flower pigmentation. Methylates caffeoyl-CoA to feruloyl-CoA, also able to methylate 5-hydroxyferuloyl-CoA. The chain is Caffeoyl-CoA O-methyltransferase 1 from Petunia hybrida (Petunia).